Reading from the N-terminus, the 347-residue chain is Aspartate-semialdehyde dehydrogenase (347 aa).

NADP(+) contacts are provided by residues T13–V16 and R41–S42. R101 is a binding site for phosphate. The active-site Acyl-thioester intermediate is C132. Q159 contacts substrate. S162–G163 lines the NADP(+) pocket. K216 is a phosphate binding site. Substrate is bound at residue R238. H245 serves as the catalytic Proton acceptor. Residue N319 participates in NADP(+) binding.

It belongs to the aspartate-semialdehyde dehydrogenase family. In terms of assembly, homodimer.

It carries out the reaction L-aspartate 4-semialdehyde + phosphate + NADP(+) = 4-phospho-L-aspartate + NADPH + H(+). It functions in the pathway amino-acid biosynthesis; L-lysine biosynthesis via DAP pathway; (S)-tetrahydrodipicolinate from L-aspartate: step 2/4. It participates in amino-acid biosynthesis; L-methionine biosynthesis via de novo pathway; L-homoserine from L-aspartate: step 2/3. The protein operates within amino-acid biosynthesis; L-threonine biosynthesis; L-threonine from L-aspartate: step 2/5. Catalyzes the NADPH-dependent formation of L-aspartate-semialdehyde (L-ASA) by the reductive dephosphorylation of L-aspartyl-4-phosphate. This chain is Aspartate-semialdehyde dehydrogenase, found in Legionella pneumophila.